We begin with the raw amino-acid sequence, 66 residues long: Large ribosomal subunit protein bL33c (66 aa).

The protein belongs to the bacterial ribosomal protein bL33 family.

The protein localises to the plastid. It is found in the chloroplast. This is Large ribosomal subunit protein bL33c from Agrostis stolonifera (Creeping bentgrass).